Here is a 370-residue protein sequence, read N- to C-terminus: Probable trehalose-phosphate phosphatase J (370 aa).

This sequence belongs to the trehalose phosphatase family. It depends on a divalent metal cation as a cofactor.

It catalyses the reaction alpha,alpha-trehalose 6-phosphate + H2O = alpha,alpha-trehalose + phosphate. It functions in the pathway glycan biosynthesis; trehalose biosynthesis. Its function is as follows. Removes the phosphate from trehalose 6-phosphate to produce free trehalose. Trehalose accumulation in plant may improve abiotic stress tolerance. This is Probable trehalose-phosphate phosphatase J (TPPJ) from Arabidopsis thaliana (Mouse-ear cress).